Here is a 457-residue protein sequence, read N- to C-terminus: Cyanidin 3-O-galactoside 2''-O-xylosyltransferase FGGT1 (457 aa).

Belongs to the UDP-glycosyltransferase family. As to expression, expressed in ovaries.

The catalysed reaction is cyanidin 3-O-beta-D-galactoside + UDP-alpha-D-xylose = cyanidin 3-O-[beta-D-xylosyl-(1-&gt;2)-beta-D-galactoside] + UDP + H(+). Its pathway is pigment biosynthesis; anthocyanin biosynthesis. Functionally, xylosyltransferase involved in anthocyanin biosynthesis by catalyzing the xylosylation of cyanidin 3-O-galactoside to form cyanidin 3-O-[2-O-(-xylosyl)-galactoside]. Required for the accumulation of anthocyanin in red-fleshed kiwifruit varieties. This Actinidia chinensis var. chinensis (Chinese soft-hair kiwi) protein is Cyanidin 3-O-galactoside 2''-O-xylosyltransferase FGGT1.